A 323-amino-acid polypeptide reads, in one-letter code: GDP-mannose 4,6-dehydratase (323 aa).

NADP(+)-binding positions include 11-14 (TGQD), arginine 36, 59-60 (DM), and 81-85 (LAAQS). Threonine 126 is an active-site residue. Active-site nucleophile residues include glutamate 128 and tyrosine 150. NADP(+)-binding residues include lysine 154, histidine 180, and arginine 185.

This sequence belongs to the NAD(P)-dependent epimerase/dehydratase family. GDP-mannose 4,6-dehydratase subfamily. As to quaternary structure, homotetramer. Requires NADP(+) as cofactor.

It carries out the reaction GDP-alpha-D-mannose = GDP-4-dehydro-alpha-D-rhamnose + H2O. It participates in bacterial outer membrane biogenesis; lipopolysaccharide biosynthesis. Its function is as follows. Catalyzes the conversion of GDP-D-mannose to GDP-4-dehydro-6-deoxy-D-mannose. The protein is GDP-mannose 4,6-dehydratase of Pseudomonas aeruginosa (strain ATCC 15692 / DSM 22644 / CIP 104116 / JCM 14847 / LMG 12228 / 1C / PRS 101 / PAO1).